The sequence spans 552 residues: CTP synthase (552 aa).

An amidoligase domain region spans residues 1-270; that stretch reads MTKYVFVTGG…DRIICEELKL (270 aa). Ser-13 contributes to the CTP binding site. Residue Ser-13 participates in UTP binding. Residues 14-19 and Asp-71 contribute to the ATP site; that span reads SLGKGI. Residues Asp-71 and Glu-144 each contribute to the Mg(2+) site. CTP contacts are provided by residues 151-153, 191-196, and Lys-227; these read DIE and KTKPTQ. UTP-binding positions include 191–196 and Lys-227; that span reads KTKPTQ. The 253-residue stretch at 295–547 folds into the Glutamine amidotransferase type-1 domain; the sequence is TIGMVGKYVD…VEAALANKQA (253 aa). Gly-356 contributes to the L-glutamine binding site. Cys-383 acts as the Nucleophile; for glutamine hydrolysis in catalysis. Residues 384–387, Glu-407, and Arg-473 contribute to the L-glutamine site; that span reads LGMQ. Catalysis depends on residues His-520 and Glu-522.

This sequence belongs to the CTP synthase family. As to quaternary structure, homotetramer.

The catalysed reaction is UTP + L-glutamine + ATP + H2O = CTP + L-glutamate + ADP + phosphate + 2 H(+). It carries out the reaction L-glutamine + H2O = L-glutamate + NH4(+). It catalyses the reaction UTP + NH4(+) + ATP = CTP + ADP + phosphate + 2 H(+). It participates in pyrimidine metabolism; CTP biosynthesis via de novo pathway; CTP from UDP: step 2/2. Allosterically activated by GTP, when glutamine is the substrate; GTP has no effect on the reaction when ammonia is the substrate. The allosteric effector GTP functions by stabilizing the protein conformation that binds the tetrahedral intermediate(s) formed during glutamine hydrolysis. Inhibited by the product CTP, via allosteric rather than competitive inhibition. Catalyzes the ATP-dependent amination of UTP to CTP with either L-glutamine or ammonia as the source of nitrogen. Regulates intracellular CTP levels through interactions with the four ribonucleotide triphosphates. The sequence is that of CTP synthase from Burkholderia ambifaria (strain MC40-6).